The sequence spans 172 residues: MDRAEKREFVSWLNGAFKESGSVVVAHYTGLTVAQMSDLRSKMRDAGGSVKVAKNRLAKIALQGTESEGISDLFTGQTVVAYANDPIAAPKVAVEFAKANDKLVILGGAMGATTLNADGVKSLASLPSLDELRAKLVGMIQTPAQRLAVLTSAPAGQIARVIGAHARKNEAA.

The protein belongs to the universal ribosomal protein uL10 family. In terms of assembly, part of the ribosomal stalk of the 50S ribosomal subunit. The N-terminus interacts with L11 and the large rRNA to form the base of the stalk. The C-terminus forms an elongated spine to which L12 dimers bind in a sequential fashion forming a multimeric L10(L12)X complex.

Its function is as follows. Forms part of the ribosomal stalk, playing a central role in the interaction of the ribosome with GTP-bound translation factors. The polypeptide is Large ribosomal subunit protein uL10 (Brucella anthropi (strain ATCC 49188 / DSM 6882 / CCUG 24695 / JCM 21032 / LMG 3331 / NBRC 15819 / NCTC 12168 / Alc 37) (Ochrobactrum anthropi)).